The following is a 145-amino-acid chain: MLNEFKAFIARGNVMDLAVGVIIGGAFGGIVKSLVDDLIMPIVGAIFGGFDFSNYFLPLSSAVNAPTLAAARAQGAVFAYGSFLTVLINFLILAWIIFLMVKGVNYLRLQVERQEKAAPEELPPPPADVQLLTEIRDLLATRPTA.

The next 3 membrane-spanning stretches (helical) occupy residues 14-34 (VMDL…VKSL), 38-58 (LIMP…YFLP), and 81-101 (GSFL…FLMV).

Belongs to the MscL family. In terms of assembly, homopentamer.

The protein localises to the cell inner membrane. Channel that opens in response to stretch forces in the membrane lipid bilayer. May participate in the regulation of osmotic pressure changes within the cell. This is Large-conductance mechanosensitive channel from Rhizobium leguminosarum bv. trifolii (strain WSM2304).